A 559-amino-acid chain; its full sequence is MRSSIIKEGYQKAPHRSLLRATGLKDEDFGKPFIGVANSYIDIIPGHFFLQEYGRIIKEEIRAAGGIPFEFNTIGVDDGIAMGHDGMLYSLPSRELIADCIETVMNAHKLDAMICIPNCDKIVPGMLLGALRVNVPTVFVSGGPMKAGRLKDGTKVDLASAFEAVGKRARNQISDEELREIECAACPGGGSCSGMFTANSMNTLCEAMGVALPGNGTIPALTKEREELIRKAARRIVEIALDERYAFRNILNKEAIHNAFVVDMAMGGSTNTVLHMMAIAKEREADFDLRKINEIAKEVSHIAKISPALYTVHMEDINRAGGVNAVMNEINRRGGVLKTEALTVSGESMGERIAGAKILDTQIIHTLENPYSAVGGLKILYGNLAEQGAVLKTAAMDAKMRKFTGKAVCFDSQEEAIAGIVGGKVKEGDVVVIRYEGPKGGPGMQEMLSPTSLIMGMNLGDKVALITDGRFSGATRGACIGHVSPEAAEGGMIGLLQEGDLIRIDVEEGVLEVLLEEAEIQKRRASFSPKTKTVASKWLKRYQLLVSNAASGAILKTEL.

Mg(2+) is bound at residue Asp78. Cys119 contacts [2Fe-2S] cluster. Positions 120 and 121 each coordinate Mg(2+). The residue at position 121 (Lys121) is an N6-carboxylysine. [2Fe-2S] cluster is bound at residue Cys192. Glu446 is a binding site for Mg(2+). The active-site Proton acceptor is Ser472.

The protein belongs to the IlvD/Edd family. Homodimer. Requires [2Fe-2S] cluster as cofactor. Mg(2+) serves as cofactor.

It carries out the reaction (2R)-2,3-dihydroxy-3-methylbutanoate = 3-methyl-2-oxobutanoate + H2O. It catalyses the reaction (2R,3R)-2,3-dihydroxy-3-methylpentanoate = (S)-3-methyl-2-oxopentanoate + H2O. Its pathway is amino-acid biosynthesis; L-isoleucine biosynthesis; L-isoleucine from 2-oxobutanoate: step 3/4. It participates in amino-acid biosynthesis; L-valine biosynthesis; L-valine from pyruvate: step 3/4. Functions in the biosynthesis of branched-chain amino acids. Catalyzes the dehydration of (2R,3R)-2,3-dihydroxy-3-methylpentanoate (2,3-dihydroxy-3-methylvalerate) into 2-oxo-3-methylpentanoate (2-oxo-3-methylvalerate) and of (2R)-2,3-dihydroxy-3-methylbutanoate (2,3-dihydroxyisovalerate) into 2-oxo-3-methylbutanoate (2-oxoisovalerate), the penultimate precursor to L-isoleucine and L-valine, respectively. The polypeptide is Dihydroxy-acid dehydratase (Wolinella succinogenes (strain ATCC 29543 / DSM 1740 / CCUG 13145 / JCM 31913 / LMG 7466 / NCTC 11488 / FDC 602W) (Vibrio succinogenes)).